The sequence spans 535 residues: Ribonuclease Y (535 aa).

The helical transmembrane segment at 4 to 24 (IILLIVSALIGLILGYALISI) threads the bilayer. Positions 118-141 (ENLSSKEKVLDSKEQSLTDKSKHI) are disordered. The 61-residue stretch at 225–285 (TITSVHLPDD…IRREIARMTL (61 aa)) folds into the KH domain. The 94-residue stretch at 351–444 (VLRHSVEVGK…VAAADALSSA (94 aa)) folds into the HD domain.

Belongs to the RNase Y family.

The protein localises to the cell membrane. Functionally, endoribonuclease that initiates mRNA decay. The protein is Ribonuclease Y of Streptococcus pyogenes serotype M1.